Reading from the N-terminus, the 336-residue chain is Glyceraldehyde-3-phosphate dehydrogenase (336 aa).

NAD(+)-binding positions include 12-13 (RI), aspartate 34, arginine 78, and serine 120. D-glyceraldehyde 3-phosphate is bound by residues 151–153 (SCT) and threonine 182. Catalysis depends on cysteine 152, which acts as the Nucleophile. Asparagine 183 serves as a coordination point for NAD(+). Residues 211–212 (NG) and arginine 234 contribute to the D-glyceraldehyde 3-phosphate site. An NAD(+)-binding site is contributed by asparagine 316.

Belongs to the glyceraldehyde-3-phosphate dehydrogenase family. As to quaternary structure, homotetramer.

Its subcellular location is the cytoplasm. The catalysed reaction is D-glyceraldehyde 3-phosphate + phosphate + NAD(+) = (2R)-3-phospho-glyceroyl phosphate + NADH + H(+). It participates in carbohydrate degradation; glycolysis; pyruvate from D-glyceraldehyde 3-phosphate: step 1/5. Functionally, catalyzes the oxidative phosphorylation of glyceraldehyde 3-phosphate (G3P) to 1,3-bisphosphoglycerate (BPG) using the cofactor NAD. The first reaction step involves the formation of a hemiacetal intermediate between G3P and a cysteine residue, and this hemiacetal intermediate is then oxidized to a thioester, with concomitant reduction of NAD to NADH. The reduced NADH is then exchanged with the second NAD, and the thioester is attacked by a nucleophilic inorganic phosphate to produce BPG. The protein is Glyceraldehyde-3-phosphate dehydrogenase (gap) of Heyndrickxia coagulans (Weizmannia coagulans).